A 278-amino-acid polypeptide reads, in one-letter code: Energy-coupling factor transporter ATP-binding protein EcfA1 (278 aa).

In terms of domain architecture, ABC transporter spans 5–239; it reads IRVQHLNYTY…GMELLRLGLD (235 aa). Position 39-46 (39-46) interacts with ATP; that stretch reads GHNGSGKS. Glu165 functions as the Proton acceptor in the catalytic mechanism.

Belongs to the ABC transporter superfamily. Energy-coupling factor EcfA family. Forms a stable energy-coupling factor (ECF) transporter complex probably composed of 2 membrane-embedded substrate-binding proteins (S component), 2 ATP-binding proteins (A component) and 2 transmembrane proteins (T component). This complex interacts with a number of substrate-specific components, including FolT and ThiT for 5-formyltetrahydrofolate and thiamine respectively.

Its subcellular location is the cell membrane. Its function is as follows. ATP-binding (A) component of a common energy-coupling factor (ECF) ABC-transporter complex. Unlike classic ABC transporters this ECF transporter provides the energy necessary to transport a number of different substrates including 5-formyltetrahydrofolate and thiamine. Expression of the complex plus FolT or ThiT in Lactococcus lactis subsp. cremoris (strain NZ9000) allows 5-formyltetrahydrofolate or thiamine uptake respectively; 5-formyltetrahydrofolate or thiamine are not taken up in the absence of FolT/ThiT or the EcfA1A2T complex. Deenergized L.lactis subsp. cremoris (treated with 2-deoxyglucose) does not take up substrate. This Lacticaseibacillus paracasei (strain ATCC 334 / BCRC 17002 / CCUG 31169 / CIP 107868 / KCTC 3260 / NRRL B-441) (Lactobacillus paracasei) protein is Energy-coupling factor transporter ATP-binding protein EcfA1.